The chain runs to 411 residues: Dual-specificity RNA methyltransferase RlmN (411 aa).

The Proton acceptor role is filled by Glu-125. The 250-residue stretch at 131 to 380 (EEGRGTLCIS…IRTPRGRDIL (250 aa)) folds into the Radical SAM core domain. Residues Cys-138 and Cys-383 are joined by a disulfide bond. The [4Fe-4S] cluster site is built by Cys-145, Cys-149, and Cys-152. Residues 209–210 (GE), Ser-241, 263–265 (SLH), and Asn-340 each bind S-adenosyl-L-methionine. Cys-383 functions as the S-methylcysteine intermediate in the catalytic mechanism.

It belongs to the radical SAM superfamily. RlmN family. It depends on [4Fe-4S] cluster as a cofactor.

The protein resides in the cytoplasm. The catalysed reaction is adenosine(2503) in 23S rRNA + 2 reduced [2Fe-2S]-[ferredoxin] + 2 S-adenosyl-L-methionine = 2-methyladenosine(2503) in 23S rRNA + 5'-deoxyadenosine + L-methionine + 2 oxidized [2Fe-2S]-[ferredoxin] + S-adenosyl-L-homocysteine. The enzyme catalyses adenosine(37) in tRNA + 2 reduced [2Fe-2S]-[ferredoxin] + 2 S-adenosyl-L-methionine = 2-methyladenosine(37) in tRNA + 5'-deoxyadenosine + L-methionine + 2 oxidized [2Fe-2S]-[ferredoxin] + S-adenosyl-L-homocysteine. In terms of biological role, specifically methylates position 2 of adenine 2503 in 23S rRNA and position 2 of adenine 37 in tRNAs. m2A2503 modification seems to play a crucial role in the proofreading step occurring at the peptidyl transferase center and thus would serve to optimize ribosomal fidelity. The protein is Dual-specificity RNA methyltransferase RlmN of Brucella suis biovar 1 (strain 1330).